The sequence spans 501 residues: Lysine--tRNA ligase (501 aa).

The Mg(2+) site is built by Glu-402 and Glu-409.

This sequence belongs to the class-II aminoacyl-tRNA synthetase family. Homodimer. Mg(2+) is required as a cofactor.

The protein localises to the cytoplasm. It carries out the reaction tRNA(Lys) + L-lysine + ATP = L-lysyl-tRNA(Lys) + AMP + diphosphate. The polypeptide is Lysine--tRNA ligase (Helicobacter pylori (strain HPAG1)).